Reading from the N-terminus, the 352-residue chain is Serine/threonine-protein phosphatase 2A activator 2 (352 aa).

The protein belongs to the PTPA-type PPIase family.

Its subcellular location is the cytoplasm. It catalyses the reaction [protein]-peptidylproline (omega=180) = [protein]-peptidylproline (omega=0). PPIases accelerate the folding of proteins. It catalyzes the cis-trans isomerization of proline imidic peptide bonds in oligopeptides. Acts as a regulatory subunit for PP2A-like phosphatases modulating their activity or substrate specificity, probably by inducing a conformational change in the catalytic subunit, a direct target of the PPIase. Can reactivate inactive phosphatase PP2A-phosphatase methylesterase complexes (PP2Ai) in presence of ATP and Mg(2+) by dissociating the inactive form from the complex. In Schizosaccharomyces pombe (strain 972 / ATCC 24843) (Fission yeast), this protein is Serine/threonine-protein phosphatase 2A activator 2 (rrd2).